A 135-amino-acid chain; its full sequence is Protein Wnt-7c (135 aa).

2 disulfides stabilise this stretch: Cys-3/Cys-17 and Cys-5/Cys-12. A lipid anchor (O-palmitoleoyl serine; by PORCN) is attached at Ser-9. N-linked (GlcNAc...) asparagine glycosylation is found at Asn-62, Asn-85, and Asn-98. 3 disulfides stabilise this stretch: Cys-81–Cys-112, Cys-97–Cys-107, and Cys-134–Cys-135.

This sequence belongs to the Wnt family. Post-translationally, palmitoleoylation is required for efficient binding to frizzled receptors. Depalmitoleoylation leads to Wnt signaling pathway inhibition.

The protein localises to the secreted. It localises to the extracellular space. It is found in the extracellular matrix. Its function is as follows. Ligand for members of the frizzled family of seven transmembrane receptors. Probable developmental protein. May be a signaling molecule which affects the development of discrete regions of tissues. Is likely to signal over only few cell diameters. This Xenopus laevis (African clawed frog) protein is Protein Wnt-7c (wnt7c).